The chain runs to 383 residues: uncharacterized protein (383 aa).

The first 23 residues, 1–23, serve as a signal peptide directing secretion; the sequence is MKLTSIPIASTLLSLLAASGTLA.

It belongs to the but2 family.

It localises to the cytoplasm. The protein localises to the nucleus. This is an uncharacterized protein from Schizosaccharomyces pombe (strain 972 / ATCC 24843) (Fission yeast).